Consider the following 1093-residue polypeptide: Isomaltosyltransferase (1093 aa).

An N-terminal signal peptide occupies residues 1 to 29 (MYVRNLTGSFRFSLSFLLCFCLFVPSIYA). The active-site Nucleophile is the D566. The active site involves E569. D631 (proton donor) is an active-site residue. Residues 968 to 1091 (VEYEAEFGVQ…GINFDNIAIV (124 aa)) form the CBM6 domain.

It belongs to the glycosyl hydrolase 31 family.

The protein localises to the secreted. It carries out the reaction 2 alpha-isomaltosyl-(1-&gt;4)-D-maltotriose = alpha-isomaltosyl-(1-&gt;3)-alpha-isomaltosyl-(1-&gt;4)-D-maltotriose + D-maltotriose. It catalyses the reaction alpha-isomaltosyl-(1-&gt;3)-alpha-isomaltosyl-(1-&gt;4)-D-maltotriose = cyclobis-(1-&gt;3)-alpha-D-isomaltosyl + D-maltotriose. Its activity is regulated as follows. Strongly inhibited by Hg(2+) and moderately inhibited by Cu(2+) and Pb(2+). Other metal ions, Tris and EDTA have almost no effects. Glycosyltransferase involved, together with CtsZ, in the conversion of alpha-1,4-glucan into a cyclic tetrasaccharide (CTS) constructed from four alpha-glucopyranosyl residues. Catalyzes the alpha-(1-&gt;3) transfer of the isomaltosyl moiety of alpha-isomaltosyl-(1-&gt;4)-D-maltotriose to another alpha-isomaltosyl-(1-&gt;4)-D-maltotriose, resulting in alpha-isomaltosyl-(1-&gt;3)-alpha-isomaltosyl-alpha-(1-&gt;4)-maltotriose formation. In addition, the enzyme catalyzes the intramolecular cyclization of the product, generating the cyclic tetrasaccharide cyclobis-(1-&gt;6)-alpha-nigerosyl. This is Isomaltosyltransferase from Sporosarcina globispora (Bacillus globisporus).